A 289-amino-acid chain; its full sequence is MRKLTSFVCGTGAGLAAYYLQRLRDPQTVVQNSWTHSDKPVDPWALWDTNWDCREPRALVRPLRNSQPEEENRYNAELEKAKAKKARHIILVRHGEYLDVGDSDDTHHLTERGRKQAEFTGKRLCELGIKWDKVVASTMVRAQETSDIILKQIDFEKEKVVNCAFLREGAPIPPQPPVGHWKPEASQFLRDGSRIEAGFRRYFHRAYPDQEKESYTLIVGHGNVIRYFVCRALQFPAEGWLRININHASITWLTISPSGNVSIKYLGDSGFMPAELLTNRIPRDVKNVV.

A helical membrane pass occupies residues 7-23; the sequence is FVCGTGAGLAAYYLQRL.

Belongs to the phosphoglycerate mutase family. BPG-dependent PGAM subfamily. As to quaternary structure, interacts with Pk92B/ASK1.

The protein localises to the mitochondrion outer membrane. The enzyme catalyses O-phospho-L-seryl-[protein] + H2O = L-seryl-[protein] + phosphate. It carries out the reaction O-phospho-L-threonyl-[protein] + H2O = L-threonyl-[protein] + phosphate. Its function is as follows. Displays phosphatase activity for serine/threonine residues, and dephosphorylates and activates Pk92B kinase. Has apparently no phosphoglycerate mutase activity. The polypeptide is Serine/threonine-protein phosphatase Pgam5, mitochondrial (Pgam5) (Drosophila melanogaster (Fruit fly)).